The primary structure comprises 335 residues: Phosphate acyltransferase (335 aa).

Belongs to the PlsX family. In terms of assembly, homodimer. Probably interacts with PlsY.

The protein resides in the cytoplasm. The catalysed reaction is a fatty acyl-[ACP] + phosphate = an acyl phosphate + holo-[ACP]. The protein operates within lipid metabolism; phospholipid metabolism. Its function is as follows. Catalyzes the reversible formation of acyl-phosphate (acyl-PO(4)) from acyl-[acyl-carrier-protein] (acyl-ACP). This enzyme utilizes acyl-ACP as fatty acyl donor, but not acyl-CoA. This Brevibacillus brevis (strain 47 / JCM 6285 / NBRC 100599) protein is Phosphate acyltransferase.